The following is a 203-amino-acid chain: Somatotropin (203 aa).

Residues 1-17 (MNRVILLLSVMCVGVSS) form the signal peptide. Position 18 is a pyrrolidone carboxylic acid (Q18). Intrachain disulfides connect C68/C176 and C193/C201.

This sequence belongs to the somatotropin/prolactin family.

It localises to the secreted. Functionally, growth hormone plays an important role in growth control and is involved in the regulation of several anabolic processes. Implicated as an osmoregulatory substance important for seawater adaptation. This chain is Somatotropin (gh), found in Verasper variegatus (Spotted flounder).